We begin with the raw amino-acid sequence, 215 residues long: Pyrrolidone-carboxylate peptidase (215 aa).

Active-site residues include Glu80, Cys143, and His167.

This sequence belongs to the peptidase C15 family. In terms of assembly, homotetramer.

Its subcellular location is the cytoplasm. The catalysed reaction is Release of an N-terminal pyroglutamyl group from a polypeptide, the second amino acid generally not being Pro.. Removes 5-oxoproline from various penultimate amino acid residues except L-proline. The sequence is that of Pyrrolidone-carboxylate peptidase from Bacillus cereus (strain 03BB102).